The following is a 433-amino-acid chain: Serine--tRNA ligase (433 aa).

235–237 (TSE) provides a ligand contact to L-serine. An ATP-binding site is contributed by 266–268 (RSE). L-serine is bound at residue E289. 353-356 (EISS) contributes to the ATP binding site. Residue S388 participates in L-serine binding.

This sequence belongs to the class-II aminoacyl-tRNA synthetase family. Type-1 seryl-tRNA synthetase subfamily. In terms of assembly, homodimer. The tRNA molecule binds across the dimer.

It is found in the cytoplasm. It catalyses the reaction tRNA(Ser) + L-serine + ATP = L-seryl-tRNA(Ser) + AMP + diphosphate + H(+). The catalysed reaction is tRNA(Sec) + L-serine + ATP = L-seryl-tRNA(Sec) + AMP + diphosphate + H(+). Its pathway is aminoacyl-tRNA biosynthesis; selenocysteinyl-tRNA(Sec) biosynthesis; L-seryl-tRNA(Sec) from L-serine and tRNA(Sec): step 1/1. Functionally, catalyzes the attachment of serine to tRNA(Ser). Is also able to aminoacylate tRNA(Sec) with serine, to form the misacylated tRNA L-seryl-tRNA(Sec), which will be further converted into selenocysteinyl-tRNA(Sec). This chain is Serine--tRNA ligase, found in Burkholderia cenocepacia (strain HI2424).